Here is a 121-residue protein sequence, read N- to C-terminus: Dihydroneopterin aldolase (121 aa).

Substrate contacts are provided by residues E22, Y54, and 73–74 (LE). Catalysis depends on K100, which acts as the Proton donor/acceptor.

This sequence belongs to the DHNA family. Homooctamer. Four molecules assemble into a ring, and two rings come together to give a cylinder with a hole of at least 13 a diameter.

It carries out the reaction 7,8-dihydroneopterin = 6-hydroxymethyl-7,8-dihydropterin + glycolaldehyde. The enzyme catalyses 7,8-dihydroneopterin = 7,8-dihydromonapterin. Its pathway is cofactor biosynthesis; tetrahydrofolate biosynthesis; 2-amino-4-hydroxy-6-hydroxymethyl-7,8-dihydropteridine diphosphate from 7,8-dihydroneopterin triphosphate: step 3/4. Functionally, catalyzes the conversion of 7,8-dihydroneopterin to 6-hydroxymethyl-7,8-dihydropterin. Can also catalyze the epimerization of carbon 2' of dihydroneopterin to dihydromonapterin. The protein is Dihydroneopterin aldolase (folB) of Staphylococcus aureus (strain COL).